The chain runs to 538 residues: MYGGEEFGNSDFYDDYAHTGDPALDLEYERNFYANRMPENVKYFLMNFCQAIKEGNLYDIQNMYENTFPQISDHHFDKTAWPDEQEVGAIVDNDKVFLILYKELYYRHIHARIPGGPKLEQRINSFFNYCDFFNLIISAQNPVMLELPDIWLWELVDEFVYQFQNFAQYRARLTDKSQDEIQQLCVNHSNVWSILCILNVLHSLVDISNIKKQLEAISQGIDPQTVAGDFGKLAFYKMLGYFSLVGLLRVHSLLGDYYQAIKVLEPIEIHKKSAYSHIPACQISTSYYVGFAYMMMRRYADAIRTFSDILLYIQRTKQLYSTRSYQNDQINKQAEQMYHLLAICLVLHPQCIDESIQQVLREKNYHDAMFKMQCGDLEVFKSFFVFACPRFVSPCPPAADAPMEDYVKDPMEHQLLVFMDEVRQQKDLPTTRSYLKLYTTLPLTKLASFIDPNASEDDVSKLLIRLLCFKHKMRNLVWSKGPSGLEGTFKSGSELDFYIDDDMIHIADTKVSHRYGDFFVRKIMKFNDLNRKLKNINI.

One can recognise a PCI domain in the interval 305–513 (TFSDILLYIQ…IHIADTKVSH (209 aa)).

The protein belongs to the eIF-3 subunit L family. Component of the eukaryotic translation initiation factor 3 (eIF-3) complex. The eIF-3 complex interacts with pix.

The protein resides in the cytoplasm. Functionally, component of the eukaryotic translation initiation factor 3 (eIF-3) complex, which is involved in protein synthesis of a specialized repertoire of mRNAs and, together with other initiation factors, stimulates binding of mRNA and methionyl-tRNAi to the 40S ribosome. The eIF-3 complex specifically targets and initiates translation of a subset of mRNAs involved in cell proliferation. The chain is Eukaryotic translation initiation factor 3 subunit L from Drosophila virilis (Fruit fly).